We begin with the raw amino-acid sequence, 137 residues long: Large ribosomal subunit protein uL16 (137 aa).

The protein belongs to the universal ribosomal protein uL16 family. In terms of assembly, part of the 50S ribosomal subunit.

Its function is as follows. Binds 23S rRNA and is also seen to make contacts with the A and possibly P site tRNAs. The protein is Large ribosomal subunit protein uL16 of Bartonella henselae (strain ATCC 49882 / DSM 28221 / CCUG 30454 / Houston 1) (Rochalimaea henselae).